Consider the following 580-residue polypeptide: NADH-quinone oxidoreductase subunit C/D (580 aa).

The tract at residues 1 to 171 (MSLDQAIPEA…PPFVLTDRLF (171 aa)) is NADH dehydrogenase I subunit C. The tract at residues 195-580 (ELMVLNFGPH…IDFVMSDVDR (386 aa)) is NADH dehydrogenase I subunit D.

It in the N-terminal section; belongs to the complex I 30 kDa subunit family. This sequence in the C-terminal section; belongs to the complex I 49 kDa subunit family. In terms of assembly, NDH-1 is composed of 13 different subunits. Subunits NuoB, CD, E, F, and G constitute the peripheral sector of the complex.

It is found in the cell inner membrane. The catalysed reaction is a quinone + NADH + 5 H(+)(in) = a quinol + NAD(+) + 4 H(+)(out). In terms of biological role, NDH-1 shuttles electrons from NADH, via FMN and iron-sulfur (Fe-S) centers, to quinones in the respiratory chain. The immediate electron acceptor for the enzyme in this species is believed to be ubiquinone. Couples the redox reaction to proton translocation (for every two electrons transferred, four hydrogen ions are translocated across the cytoplasmic membrane), and thus conserves the redox energy in a proton gradient. This is NADH-quinone oxidoreductase subunit C/D from Cereibacter sphaeroides (strain ATCC 17029 / ATH 2.4.9) (Rhodobacter sphaeroides).